We begin with the raw amino-acid sequence, 85 residues long: Putative membrane protein insertion efficiency factor (85 aa).

The protein belongs to the UPF0161 family.

The protein localises to the cell inner membrane. In terms of biological role, could be involved in insertion of integral membrane proteins into the membrane. The polypeptide is Putative membrane protein insertion efficiency factor (Serratia proteamaculans (strain 568)).